The chain runs to 241 residues: 1-(5-phosphoribosyl)-5-[(5-phosphoribosylamino)methylideneamino] imidazole-4-carboxamide isomerase (241 aa).

Asp-11 serves as the catalytic Proton acceptor. The active-site Proton donor is Asp-130.

Belongs to the HisA/HisF family.

It is found in the cytoplasm. The catalysed reaction is 1-(5-phospho-beta-D-ribosyl)-5-[(5-phospho-beta-D-ribosylamino)methylideneamino]imidazole-4-carboxamide = 5-[(5-phospho-1-deoxy-D-ribulos-1-ylimino)methylamino]-1-(5-phospho-beta-D-ribosyl)imidazole-4-carboxamide. Its pathway is amino-acid biosynthesis; L-histidine biosynthesis; L-histidine from 5-phospho-alpha-D-ribose 1-diphosphate: step 4/9. This chain is 1-(5-phosphoribosyl)-5-[(5-phosphoribosylamino)methylideneamino] imidazole-4-carboxamide isomerase, found in Acidothermus cellulolyticus (strain ATCC 43068 / DSM 8971 / 11B).